The following is a 264-amino-acid chain: Tropomyosin Cha f 1.0101 (264 aa).

An N-acetylmethionine modification is found at methionine 1. Disordered regions lie at residues 1-56 and 92-126; these read MDAI…VENE and IQLP…SERM. Residues 1–264 adopt a coiled-coil conformation; it reads MDAIKKKMQA…RLEDELVNEK (264 aa). A compositionally biased stretch (basic and acidic residues) spans 12 to 45; it reads KLEKDNAMDRADTLEQQNKEANLRAEKTEEEIRA.

Belongs to the tropomyosin family. As to quaternary structure, homodimer. In terms of tissue distribution, expressed in muscle (at protein level). Expressed in claw muscles.

Functionally, tropomyosin, in association with the troponin complex, plays a central role in the calcium dependent regulation of muscle contraction. This chain is Tropomyosin Cha f 1.0101, found in Charybdis feriata (Crucifix crab).